Here is a 124-residue protein sequence, read N- to C-terminus: Tax1-binding protein 3 homolog (124 aa).

The 89-residue stretch at A18 to S106 folds into the PDZ domain.

May regulate a number of protein-protein interactions by competing for PDZ domain binding sites. This Caenorhabditis elegans protein is Tax1-binding protein 3 homolog.